The primary structure comprises 89 residues: MAKFSAIITDKVGLHARPASVLAKEASKFSSNITIIANEKQGNLKSIMNVMAMAIKTGTEITIQADGNDADQAIQAIKQTMIDTALIQG.

Residues 2-89 (AKFSAIITDK…TMIDTALIQG (88 aa)) enclose the HPr domain. The active-site Pros-phosphohistidine intermediate is His15. Position 46 is a phosphoserine; by HPrK/P (Ser46).

It belongs to the HPr family.

The protein resides in the cytoplasm. Phosphorylation on Ser-46 inhibits the phosphoryl transfer from enzyme I to HPr. Its function is as follows. General (non sugar-specific) component of the phosphoenolpyruvate-dependent sugar phosphotransferase system (sugar PTS). This major carbohydrate active-transport system catalyzes the phosphorylation of incoming sugar substrates concomitantly with their translocation across the cell membrane. The phosphoryl group from phosphoenolpyruvate (PEP) is transferred to the phosphoryl carrier protein HPr by enzyme I. Phospho-HPr then transfers it to the PTS EIIA domain. In terms of biological role, P-Ser-HPr interacts with the catabolite control protein A (CcpA), forming a complex that binds to DNA at the catabolite response elements cre, operator sites preceding a large number of catabolite-regulated genes. Thus, P-Ser-HPr is a corepressor in carbon catabolite repression (CCR), a mechanism that allows bacteria to coordinate and optimize the utilization of available carbon sources. P-Ser-HPr also plays a role in inducer exclusion, in which it probably interacts with several non-PTS permeases and inhibits their transport activity. This chain is Phosphocarrier protein HPr (ptsH), found in Mycoplasma capricolum subsp. capricolum (strain California kid / ATCC 27343 / NCTC 10154).